The primary structure comprises 464 residues: ATP synthase subunit beta (464 aa).

An ATP-binding site is contributed by 153-160 (GGAGVGKT).

Belongs to the ATPase alpha/beta chains family. F-type ATPases have 2 components, CF(1) - the catalytic core - and CF(0) - the membrane proton channel. CF(1) has five subunits: alpha(3), beta(3), gamma(1), delta(1), epsilon(1). CF(0) has three main subunits: a(1), b(2) and c(9-12). The alpha and beta chains form an alternating ring which encloses part of the gamma chain. CF(1) is attached to CF(0) by a central stalk formed by the gamma and epsilon chains, while a peripheral stalk is formed by the delta and b chains.

It is found in the cell membrane. It catalyses the reaction ATP + H2O + 4 H(+)(in) = ADP + phosphate + 5 H(+)(out). In terms of biological role, produces ATP from ADP in the presence of a proton gradient across the membrane. The catalytic sites are hosted primarily by the beta subunits. The protein is ATP synthase subunit beta of Clostridium novyi (strain NT).